The primary structure comprises 178 residues: Cytochrome b6-f complex iron-sulfur subunit (178 aa).

Residues 20 to 42 form a helical membrane-spanning segment; it reads LLTFGSVTGVALGSLYPVVKYFI. The Rieske domain occupies 68–161; sequence WLANHSDGDR…IAVENDNVFV (94 aa). Positions 107, 109, 125, and 128 each coordinate [2Fe-2S] cluster. Cys112 and Cys127 form a disulfide bridge.

Belongs to the Rieske iron-sulfur protein family. The 4 large subunits of the cytochrome b6-f complex are cytochrome b6, subunit IV (17 kDa polypeptide, PetD), cytochrome f and the Rieske protein, while the 4 small subunits are PetG, PetL, PetM and PetN. The complex functions as a dimer. The cofactor is [2Fe-2S] cluster.

Its subcellular location is the cellular thylakoid membrane. The catalysed reaction is 2 oxidized [plastocyanin] + a plastoquinol + 2 H(+)(in) = 2 reduced [plastocyanin] + a plastoquinone + 4 H(+)(out). Component of the cytochrome b6-f complex, which mediates electron transfer between photosystem II (PSII) and photosystem I (PSI), cyclic electron flow around PSI, and state transitions. This chain is Cytochrome b6-f complex iron-sulfur subunit, found in Prochlorococcus marinus (strain MIT 9303).